We begin with the raw amino-acid sequence, 385 residues long: 1-deoxy-D-xylulose 5-phosphate reductoisomerase 1 (385 aa).

6 residues coordinate NADPH: T11, G12, S13, I14, N39, and N122. K123 is a 1-deoxy-D-xylulose 5-phosphate binding site. Residue E124 participates in NADPH binding. D148 contributes to the Mn(2+) binding site. 4 residues coordinate 1-deoxy-D-xylulose 5-phosphate: S149, E150, S174, and H197. E150 provides a ligand contact to Mn(2+). G203 contacts NADPH. Residues S210, N215, K216, and E219 each coordinate 1-deoxy-D-xylulose 5-phosphate. E219 contacts Mn(2+).

The protein belongs to the DXR family. Requires Mg(2+) as cofactor. Mn(2+) is required as a cofactor.

The enzyme catalyses 2-C-methyl-D-erythritol 4-phosphate + NADP(+) = 1-deoxy-D-xylulose 5-phosphate + NADPH + H(+). It functions in the pathway isoprenoid biosynthesis; isopentenyl diphosphate biosynthesis via DXP pathway; isopentenyl diphosphate from 1-deoxy-D-xylulose 5-phosphate: step 1/6. In terms of biological role, catalyzes the NADPH-dependent rearrangement and reduction of 1-deoxy-D-xylulose-5-phosphate (DXP) to 2-C-methyl-D-erythritol 4-phosphate (MEP). This chain is 1-deoxy-D-xylulose 5-phosphate reductoisomerase 1, found in Bacillus anthracis.